The sequence spans 80 residues: Putative defensin-like protein 28 (80 aa).

The N-terminal stretch at Met-1–Gly-22 is a signal peptide.

The protein belongs to the DEFL family.

The protein localises to the secreted. This Arabidopsis thaliana (Mouse-ear cress) protein is Putative defensin-like protein 28.